Consider the following 110-residue polypeptide: UPF0060 membrane protein Bpet0062 (110 aa).

Helical transmembrane passes span 7-27 (LGLFALTAVAEIVGCYLPYLW), 33-53 (SAWLLVPAALSLAVFAWLLTL), 63-83 (AAYGGVYVSMALLWLWAVDGV), and 86-106 (ATTDWAGVGLCLAGMALIMAG).

Belongs to the UPF0060 family.

It localises to the cell inner membrane. This Bordetella petrii (strain ATCC BAA-461 / DSM 12804 / CCUG 43448) protein is UPF0060 membrane protein Bpet0062.